The following is a 185-amino-acid chain: Ribosome-recycling factor (185 aa).

Belongs to the RRF family.

The protein localises to the cytoplasm. In terms of biological role, responsible for the release of ribosomes from messenger RNA at the termination of protein biosynthesis. May increase the efficiency of translation by recycling ribosomes from one round of translation to another. This chain is Ribosome-recycling factor, found in Streptococcus pyogenes serotype M1.